Reading from the N-terminus, the 401-residue chain is MISASDMLAGLTGLGVTTVAGVPCSYLTPLINRVISDRATRYLTVTQEGEAAAVAAGSWLGGGLGCAITQNSGLGNMTNPLTSLLHPARIPAVVISTWRGRPGEKDEPQHHLMGRVTGDLFGLCDMEWSLLPDTPDALRGEFDVCREALARRELPYGFLLPQGVIADEPLDEEAPRSRAGRLVRHARTGPSDAAPTRVAALERLLAELPPAAAVVSTTGKTSRELYTLDDRDQHFYMVGAMGSAATVGLGVALHTPRPVVVVDGDGSALMRLGSLATVAAHAPGNLVHLILDNGVHDSTGGQRTLSSAVDLPAVAAACGYRAVHACGSLDDLTTALAGALATDGPTLIHLPIRPGSLAALGRPKVQPHEVARRFREFATEPWPASAVGSGTRAAAGSAGDR.

Residues 382–401 (WPASAVGSGTRAAAGSAGDR) form a disordered region. Positions 384-401 (ASAVGSGTRAAAGSAGDR) are enriched in low complexity.

This sequence belongs to the TPP enzyme family. It depends on thiamine diphosphate as a cofactor. The cofactor is Mg(2+).

The catalysed reaction is 3-phosphonopyruvate + H(+) = phosphonoacetaldehyde + CO2. The protein operates within secondary metabolite biosynthesis; bialaphos biosynthesis. Its function is as follows. Involved in the biosynthesis of phosphinothricin tripeptide (PTT), also known as bialaphos (BA), a natural-product antibiotic and potent herbicide. Catalyzes the decarboxylation of phosphonopyruvate (PnPy) to generate phosphonoacetaldehyde (PnAA). The polypeptide is Phosphonopyruvate decarboxylase (Streptomyces hygroscopicus).